The chain runs to 357 residues: MDDLKQKYLSQIAAAQDEAGLEAIRLAAVGKKGEVALKMRELGKMTPEERQVAGPALNALKDEINSALAAKKAGLADAALDARLRDEWLDVTLPARGRPRGTIHPVSQVTEEVTAIFGEMGFSVAEGPRIDTDWYNFDALNIPGHHPARAEMDTFYMTRAEGDDRPPHVLRTHTSPVQIRTMEAQGAPLRIICPGGVYRADYDQTHTPMFHQVEGLAIDKDISMANLKWVLEEFFAAFFEIDGIKTRFRASHFPFTEPSAEVDIQCSWIDGQLRIGEGDDWLEVLGSGMVHPKVLAAGGIDPDQWQGFAFGMGIDRIAMLKYGIPDLRAFFDSDLRWLRHYGFASLDQPTLHGGLSR.

Glu257 is a Mg(2+) binding site.

It belongs to the class-II aminoacyl-tRNA synthetase family. Phe-tRNA synthetase alpha subunit type 1 subfamily. In terms of assembly, tetramer of two alpha and two beta subunits. Mg(2+) is required as a cofactor.

It localises to the cytoplasm. It catalyses the reaction tRNA(Phe) + L-phenylalanine + ATP = L-phenylalanyl-tRNA(Phe) + AMP + diphosphate + H(+). This chain is Phenylalanine--tRNA ligase alpha subunit, found in Roseobacter denitrificans (strain ATCC 33942 / OCh 114) (Erythrobacter sp. (strain OCh 114)).